Consider the following 534-residue polypeptide: 2,3-bisphosphoglycerate-independent phosphoglycerate mutase (534 aa).

Residues aspartate 15 and serine 65 each coordinate Mn(2+). Serine 65 (phosphoserine intermediate) is an active-site residue. Substrate is bound by residues histidine 126, 156-157 (RD), arginine 188, arginine 194, 260-263 (RPDR), and lysine 333. Positions 400, 404, 441, 442, and 459 each coordinate Mn(2+).

It belongs to the BPG-independent phosphoglycerate mutase family. In terms of assembly, monomer. It depends on Mn(2+) as a cofactor.

The catalysed reaction is (2R)-2-phosphoglycerate = (2R)-3-phosphoglycerate. It functions in the pathway carbohydrate degradation; glycolysis; pyruvate from D-glyceraldehyde 3-phosphate: step 3/5. Catalyzes the interconversion of 2-phosphoglycerate and 3-phosphoglycerate. In Acaryochloris marina (strain MBIC 11017), this protein is 2,3-bisphosphoglycerate-independent phosphoglycerate mutase.